A 364-amino-acid polypeptide reads, in one-letter code: tRNA 2-selenouridine synthase (364 aa).

The Rhodanese domain occupies 14 to 137; sequence LLADTPLIDV…LRQTAIQATW (124 aa). Cys-97 functions as the S-selanylcysteine intermediate in the catalytic mechanism.

This sequence belongs to the SelU family. As to quaternary structure, monomer.

It carries out the reaction 5-methylaminomethyl-2-thiouridine(34) in tRNA + selenophosphate + (2E)-geranyl diphosphate + H2O + H(+) = 5-methylaminomethyl-2-selenouridine(34) in tRNA + (2E)-thiogeraniol + phosphate + diphosphate. The catalysed reaction is 5-methylaminomethyl-2-thiouridine(34) in tRNA + (2E)-geranyl diphosphate = 5-methylaminomethyl-S-(2E)-geranyl-thiouridine(34) in tRNA + diphosphate. The enzyme catalyses 5-methylaminomethyl-S-(2E)-geranyl-thiouridine(34) in tRNA + selenophosphate + H(+) = 5-methylaminomethyl-2-(Se-phospho)selenouridine(34) in tRNA + (2E)-thiogeraniol. It catalyses the reaction 5-methylaminomethyl-2-(Se-phospho)selenouridine(34) in tRNA + H2O = 5-methylaminomethyl-2-selenouridine(34) in tRNA + phosphate. Functionally, involved in the post-transcriptional modification of the uridine at the wobble position (U34) of tRNA(Lys), tRNA(Glu) and tRNA(Gln). Catalyzes the conversion of 2-thiouridine (S2U-RNA) to 2-selenouridine (Se2U-RNA). Acts in a two-step process involving geranylation of 2-thiouridine (S2U) to S-geranyl-2-thiouridine (geS2U) and subsequent selenation of the latter derivative to 2-selenouridine (Se2U) in the tRNA chain. The chain is tRNA 2-selenouridine synthase from Salmonella agona (strain SL483).